We begin with the raw amino-acid sequence, 260 residues long: Homeobox protein CDX-1 (260 aa).

A DNA-binding region (homeobox) is located at residues 149 to 208 (KDKYRVVYTDHQRLELEKEFHYSRYITIRRKAELAAALGLTERQVKIWFQNRRAKERKVN). The tract at residues 152 to 173 (YRVVYTDHQRLELEKEFHYSRY) is interaction with DNA. An interaction with 5-mCpG DNA region spans residues 191–202 (RQVKIWFQNRRA). The tract at residues 204–260 (ERKVNKKKLQQQSQPTSTTTPTPPAVGTPGPMGTLCSGSAPSLVSSSPLTIKEEFMP) is disordered. Composition is skewed to low complexity over residues 213 to 223 (QQQSQPTSTTT) and 240 to 252 (SGSA…SSPL).

This sequence belongs to the Caudal homeobox family.

The protein resides in the nucleus. Its function is as follows. Plays a role in transcriptional regulation. Involved in activated KRAS-mediated transcriptional activation of PRKD1. Binds to the PRKD1 promoter. Could play a role in the terminal differentiation of the intestine. Binds preferentially to methylated DNA. In Gallus gallus (Chicken), this protein is Homeobox protein CDX-1 (CDX1).